A 761-amino-acid chain; its full sequence is MALARCVLAVILGALSVVARADPVSRSPLHRPHPSPPRSQHAHYLPSSRRPPRTPRFPLPLRIPAAQRPQVLSTGHTPPTIPRRCGAGESWGNATNLGVPCLHWDEVPPFLERSPPASWAELRGQPHNFCRSPDGSGRPWCFYRNAQGKVDWGYCDCGQGPALPVIRLVGGNSGHEGRVELYHAGQWGTICDDQWDNADADVICRQLGLSGIAKAWHQAHFGEGSGPILLDEVRCTGNELSIEQCPKSSWGEHNCGHKEDAGVSCVPLTDGVIRLAGGKSTHEGRLEVYYKGQWGTVCDDGWTEMNTYVACRLLGFKYGKQSSVNHFDGSNRPIWLDDVSCSGKEVSFIQCSRRQWGRHDCSHREDVGLTCYPDSDGHRLSPGFPIRLVDGENKKEGRVEVFVNGQWGTICDDGWTDKHAAVICRQLGYKGPARARTMAYFGEGKGPIHMDNVKCTGNEKALADCVKQDIGRHNCRHSEDAGVICDYLEKKASSSGNKEMLSSGCGLRLLHRRQKRIIGGNNSLRGAWPWQASLRLRSAHGDGRLLCGATLLSSCWVLTAAHCFKRYGNNSRSYAVRVGDYHTLVPEEFEQEIGVQQIVIHRNYRPDRSDYDIALVRLQGPGEQCARLSTHVLPACLPLWRERPQKTASNCHITGWGDTGRAYSRTLQQAAVPLLPKRFCKERYKGLFTGRMLCAGNLQEDNRVDSCQGDSGGPLMCEKPDESWVVYGVTSWGYGCGVKDTPGVYTRVPAFVPWIKSVTSL.

Positions 1–21 (MALARCVLAVILGALSVVARA) are cleaved as a signal peptide. Positions 25 to 87 (SRSPLHRPHP…PPTIPRRCGA (63 aa)) are disordered. Positions 38 to 48 (RSQHAHYLPSS) are enriched in low complexity. The Kringle domain maps to 85-157 (CGAGESWGNA…GKVDWGYCDC (73 aa)). Disulfide bonds link Cys85–Cys157, Cys101–Cys141, Cys130–Cys155, Cys191–Cys255, Cys204–Cys265, Cys235–Cys245, Cys298–Cys361, Cys311–Cys371, Cys341–Cys351, Cys411–Cys475, Cys424–Cys485, Cys455–Cys465, Cys505–Cys636, Cys547–Cys563, Cys651–Cys717, Cys680–Cys694, and Cys707–Cys736. N-linked (GlcNAc...) asparagine glycosylation is present at Asn93. 3 consecutive SRCR domains span residues 166–267 (IRLV…SCVP), 273–373 (IRLA…TCYP), and 386–487 (IRLV…ICDY). The tract at residues 505-516 (CGLRLLHRRQKR) is zymogen activation region. One can recognise a Peptidase S1 domain in the interval 517–760 (IIGGNNSLRG…FVPWIKSVTS (244 aa)). N-linked (GlcNAc...) asparagine glycosylation is present at Asn521. The active-site Charge relay system is the His562. Residue Asn569 is glycosylated (N-linked (GlcNAc...) asparagine). Asp612 serves as the catalytic Charge relay system. Ser711 functions as the Charge relay system in the catalytic mechanism.

It belongs to the peptidase S1 family. As to expression, most abundant in cerebral cortex, hippocampus and amygdala.

Its subcellular location is the secreted. Functionally, plays a role in neuronal plasticity and the proteolytic action may subserve structural reorganizations associated with learning and memory operations. This is Neurotrypsin (Prss12) from Mus musculus (Mouse).